We begin with the raw amino-acid sequence, 501 residues long: Vitamin D 25-hydroxylase (501 aa).

Residue alanine 250 participates in substrate binding. Heme is bound at residue cysteine 448.

The protein belongs to the cytochrome P450 family. Homodimer. It depends on heme as a cofactor. Highly expressed in the liver and testis.

It is found in the endoplasmic reticulum membrane. The protein resides in the microsome membrane. The catalysed reaction is calciol + reduced [NADPH--hemoprotein reductase] + O2 = calcidiol + oxidized [NADPH--hemoprotein reductase] + H2O + H(+). It carries out the reaction vitamin D2 + reduced [NADPH--hemoprotein reductase] + O2 = 25-hydroxyvitamin D2 + oxidized [NADPH--hemoprotein reductase] + H2O + H(+). The enzyme catalyses 1alpha-hydroxyvitamin D2 + reduced [NADPH--hemoprotein reductase] + O2 = 1alpha,25-dihydroxyvitamin D2 + oxidized [NADPH--hemoprotein reductase] + H2O + H(+). It catalyses the reaction alfacalcidol + reduced [NADPH--hemoprotein reductase] + O2 = calcitriol + oxidized [NADPH--hemoprotein reductase] + H2O + H(+). It participates in hormone biosynthesis; vitamin D biosynthesis. Functionally, a cytochrome P450 monooxygenase involved in activation of vitamin D precursors. Catalyzes hydroxylation at C-25 of both forms of vitamin D, vitamin D(2) and D(3) (calciol). Can metabolize vitamin D analogs/prodrugs 1alpha-hydroxyvitamin D(2) (doxercalciferol) and 1alpha-hydroxyvitamin D(3) (alfacalcidol) forming 25-hydroxy derivatives. Mechanistically, uses molecular oxygen inserting one oxygen atom into a substrate, and reducing the second into a water molecule, with two electrons provided by NADPH via cytochrome P450 reductase (CPR; NADPH-ferrihemoprotein reductase). The protein is Vitamin D 25-hydroxylase (Cyp2r1) of Mus musculus (Mouse).